The primary structure comprises 158 residues: NAD(P)H-quinone oxidoreductase subunit N (158 aa).

Belongs to the complex I NdhN subunit family. As to quaternary structure, NDH-1 can be composed of about 15 different subunits; different subcomplexes with different compositions have been identified which probably have different functions.

The protein localises to the cellular thylakoid membrane. The enzyme catalyses a plastoquinone + NADH + (n+1) H(+)(in) = a plastoquinol + NAD(+) + n H(+)(out). It catalyses the reaction a plastoquinone + NADPH + (n+1) H(+)(in) = a plastoquinol + NADP(+) + n H(+)(out). In terms of biological role, NDH-1 shuttles electrons from an unknown electron donor, via FMN and iron-sulfur (Fe-S) centers, to quinones in the respiratory and/or the photosynthetic chain. The immediate electron acceptor for the enzyme in this species is believed to be plastoquinone. Couples the redox reaction to proton translocation, and thus conserves the redox energy in a proton gradient. Cyanobacterial NDH-1 also plays a role in inorganic carbon-concentration. The sequence is that of NAD(P)H-quinone oxidoreductase subunit N from Trichodesmium erythraeum (strain IMS101).